A 741-amino-acid polypeptide reads, in one-letter code: Methionine--tRNA ligase (741 aa).

The 'HIGH' region motif lies at 11-21; the sequence is PYANGPIHAGH. 4 residues coordinate Zn(2+): cysteine 143, cysteine 146, cysteine 156, and cysteine 159. Positions 345–349 match the 'KMSKS' region motif; the sequence is KFSTS. Threonine 348 contributes to the ATP binding site. Residues 641 to 741 form the tRNA-binding domain; the sequence is EFAKLDLRVG…KEVKLGARIR (101 aa).

This sequence belongs to the class-I aminoacyl-tRNA synthetase family. MetG type 1 subfamily. As to quaternary structure, homodimer. Zn(2+) serves as cofactor.

The protein resides in the cytoplasm. The enzyme catalyses tRNA(Met) + L-methionine + ATP = L-methionyl-tRNA(Met) + AMP + diphosphate. Is required not only for elongation of protein synthesis but also for the initiation of all mRNA translation through initiator tRNA(fMet) aminoacylation. This is Methionine--tRNA ligase from Thermococcus kodakarensis (strain ATCC BAA-918 / JCM 12380 / KOD1) (Pyrococcus kodakaraensis (strain KOD1)).